The chain runs to 119 residues: Large ribosomal subunit protein uL22 (119 aa).

The protein belongs to the universal ribosomal protein uL22 family. As to quaternary structure, part of the 50S ribosomal subunit.

This protein binds specifically to 23S rRNA; its binding is stimulated by other ribosomal proteins, e.g. L4, L17, and L20. It is important during the early stages of 50S assembly. It makes multiple contacts with different domains of the 23S rRNA in the assembled 50S subunit and ribosome. Its function is as follows. The globular domain of the protein is located near the polypeptide exit tunnel on the outside of the subunit, while an extended beta-hairpin is found that lines the wall of the exit tunnel in the center of the 70S ribosome. This chain is Large ribosomal subunit protein uL22, found in Bifidobacterium animalis subsp. lactis (strain AD011).